The chain runs to 228 residues: Ribulose-phosphate 3-epimerase, cytoplasmic isoform (228 aa).

Ser-12 serves as a coordination point for substrate. A divalent metal cation contacts are provided by His-37, Asp-39, and His-70. Asp-39 (proton acceptor) is an active-site residue. Substrate-binding positions include His-70, 150–153 (GFGG), 179–181 (DGG), and 201–202 (GS). A divalent metal cation is bound at residue Asp-179. Asp-179 acts as the Proton donor in catalysis.

The protein belongs to the ribulose-phosphate 3-epimerase family. In terms of assembly, homodimer. It depends on Co(2+) as a cofactor. Requires Fe(2+) as cofactor. The cofactor is Mn(2+). Zn(2+) is required as a cofactor. As to expression, predominantly accumulates in roots and seedlings.

It is found in the cytoplasm. It carries out the reaction D-ribulose 5-phosphate = D-xylulose 5-phosphate. The protein operates within carbohydrate degradation; pentose phosphate pathway; D-xylulose 5-phosphate from D-ribulose 5-phosphate (non-oxidative stage): step 1/1. In terms of biological role, catalyzes the reversible epimerization of D-ribulose 5-phosphate to D-xylulose 5-phosphate. The chain is Ribulose-phosphate 3-epimerase, cytoplasmic isoform from Oryza sativa subsp. japonica (Rice).